The primary structure comprises 119 residues: HTH-type transcriptional regulator SarX (119 aa).

Positions Leu55 to Glu78 form a DNA-binding region, H-T-H motif.

The protein belongs to the SarA family.

The protein localises to the cytoplasm. Functionally, involved in the regulation of virulence genes. Acts as a repressor of the agr locus and consequently targets genes regulated by the agr system such as sspA, hla and hlb. Binds directly to the agr promoter region. The polypeptide is HTH-type transcriptional regulator SarX (sarX) (Staphylococcus aureus (strain USA300)).